A 92-amino-acid chain; its full sequence is Small ribosomal subunit protein uS19 (92 aa).

This sequence belongs to the universal ribosomal protein uS19 family.

Functionally, protein S19 forms a complex with S13 that binds strongly to the 16S ribosomal RNA. This Rhizobium rhizogenes (strain K84 / ATCC BAA-868) (Agrobacterium radiobacter) protein is Small ribosomal subunit protein uS19.